Reading from the N-terminus, the 338-residue chain is MRVLGIETSCDETGIAVYDDELGLLSHTLYSQVKLHADYGGVVPELASRDHVRKIVPLIRQALKDANTEMADLDGIAYTKGPGLIGALLVGACVGRSLAFAWDKPAIGVHHMEGHLLAPMLEDDAPEFPFVALLVSGGHSMLVKVDGIGRYEVLGESVDDAAGEAFDKTAKLMGLDYPGGPRLAKLAAKGLPAGYKFPRPMTDRPGLDFSFSGLKTFTANTIAAEPDDEQTRANIARAFEEAVVDTLAIKCRRALKQTGYNRLVIAGGVSANTRLRETLAEMMNSLGGQVFYPRGEFCTDNGAMIAFAGLQRLKAGQHEDLAVKGQPRWPLDTLPPVA.

Fe cation contacts are provided by histidine 111 and histidine 115. Substrate-binding positions include 134-138 (LVSGG), aspartate 167, glycine 180, and asparagine 272. Aspartate 300 is a binding site for Fe cation.

This sequence belongs to the KAE1 / TsaD family. It depends on Fe(2+) as a cofactor.

It localises to the cytoplasm. It carries out the reaction L-threonylcarbamoyladenylate + adenosine(37) in tRNA = N(6)-L-threonylcarbamoyladenosine(37) in tRNA + AMP + H(+). In terms of biological role, required for the formation of a threonylcarbamoyl group on adenosine at position 37 (t(6)A37) in tRNAs that read codons beginning with adenine. Is involved in the transfer of the threonylcarbamoyl moiety of threonylcarbamoyl-AMP (TC-AMP) to the N6 group of A37, together with TsaE and TsaB. TsaD likely plays a direct catalytic role in this reaction. The sequence is that of tRNA N6-adenosine threonylcarbamoyltransferase from Shewanella baltica (strain OS223).